The primary structure comprises 351 residues: C(7)-cyclitol 7-kinase (351 aa).

This sequence belongs to the ROK (NagC/XylR) family.

The catalysed reaction is valienone + ATP = valienone 7-phosphate + ADP + H(+). It carries out the reaction validone + ATP = validone 7-phosphate + ADP + H(+). Involved in the biosynthesis of the antifungal agent validamycin A. Catalyzes the phosphorylation of valienone and validone to their 7-phosphate derivatives. This is C(7)-cyclitol 7-kinase from Streptomyces hygroscopicus subsp. limoneus.